The following is a 364-amino-acid chain: tRNA 2-selenouridine synthase (364 aa).

Residues 14-137 form the Rhodanese domain; that stretch reads LLADTPLIDV…LRQTAIQATW (124 aa). Catalysis depends on C97, which acts as the S-selanylcysteine intermediate.

It belongs to the SelU family. Monomer.

The enzyme catalyses 5-methylaminomethyl-2-thiouridine(34) in tRNA + selenophosphate + (2E)-geranyl diphosphate + H2O + H(+) = 5-methylaminomethyl-2-selenouridine(34) in tRNA + (2E)-thiogeraniol + phosphate + diphosphate. The catalysed reaction is 5-methylaminomethyl-2-thiouridine(34) in tRNA + (2E)-geranyl diphosphate = 5-methylaminomethyl-S-(2E)-geranyl-thiouridine(34) in tRNA + diphosphate. It carries out the reaction 5-methylaminomethyl-S-(2E)-geranyl-thiouridine(34) in tRNA + selenophosphate + H(+) = 5-methylaminomethyl-2-(Se-phospho)selenouridine(34) in tRNA + (2E)-thiogeraniol. It catalyses the reaction 5-methylaminomethyl-2-(Se-phospho)selenouridine(34) in tRNA + H2O = 5-methylaminomethyl-2-selenouridine(34) in tRNA + phosphate. In terms of biological role, involved in the post-transcriptional modification of the uridine at the wobble position (U34) of tRNA(Lys), tRNA(Glu) and tRNA(Gln). Catalyzes the conversion of 2-thiouridine (S2U-RNA) to 2-selenouridine (Se2U-RNA). Acts in a two-step process involving geranylation of 2-thiouridine (S2U) to S-geranyl-2-thiouridine (geS2U) and subsequent selenation of the latter derivative to 2-selenouridine (Se2U) in the tRNA chain. This Salmonella heidelberg (strain SL476) protein is tRNA 2-selenouridine synthase.